The chain runs to 223 residues: MKRTKNINHSSFRKSWSARHLTPVALAVTAVFMLAGCEKSDETVSLYQNADDCSAANPGKAAECTTAYTNAVKEAERTAPKYATREDCVAEFGEGQCQQTPAQAGVAPENQAQAQSSGSFWMPLMAGYMMGRLMGGGMAQQQPLFSSKNPASPAYGQYTDASGKSYGAAQPGRTMNVPKTAMAPKPATTTTVTRGGFGESVAKQSTMQRSAAGSTSSSRSMGG.

The disordered stretch occupies residues Ser-165–Gly-223. Composition is skewed to low complexity over residues Val-177–Thr-193 and Arg-209–Gly-223.

This sequence belongs to the UPF0441 family.

The sequence is that of UPF0441 protein KPN78578_33850 from Klebsiella pneumoniae subsp. pneumoniae (strain ATCC 700721 / MGH 78578).